We begin with the raw amino-acid sequence, 142 residues long: Secreted RxLR effector protein 161 (142 aa).

Positions 1-27 are cleaved as a signal peptide; sequence MKNVPYLSAVGAIMYLMVVTRPDLAAA. Positions 48–51 match the RxLR motif; that stretch reads RVLR.

Belongs to the RxLR effector family.

The protein resides in the secreted. Its subcellular location is the host chloroplast envelope. It localises to the host nucleus. In terms of biological role, secreted effector that completely suppresses the host cell death induced by cell death-inducing proteins. In Plasmopara viticola (Downy mildew of grapevine), this protein is Secreted RxLR effector protein 161.